An 828-amino-acid polypeptide reads, in one-letter code: MTRSPLRRLIFGALRRVLYLWVRSETINQSSLTLKLDRSRPVFYALSSPSLTDLAVVDHECTKAGLPRPVLPVAVGPLQEPAGFFYLTPDPDWLGRQDKRGAPPTLERLVAAISQHAEEDTQIIPVSVFWGQTPASESSPWKLLFADSWAVTGRLRRLLSVLILGRKTRVQFSAPIHLRELVDHNKGHERTVRMAQRVMRVHFRNLKTAVIGPDISHRRNLVKGLVHDPLVRQAISDEAEREKIPYAKAEAKALHYGNEIASDYTYTAIRFLEVVLSWFWNKIYDGVKVNHIEQVQGIAPGHEVIYVPCHRSHIDYLLLSYLLFRNGLTPPHIAAGINLNMPVIGGLLRRGGAFFMRRTFKGNPLYTAVFNEYLHTLFTKGFPVEYFVEGGRSRTGRMLQPRTGMLAITLRSFLRSSRTPIVFVPVYIGYERVLEGRTYLGELRGASKKKESIFDIFKVIGALKQRFGQVYVNFGEPIRLAGFLDEQQPGWREQELGPQFRPTWLNETTTRLGETVARHLNEAAAINPVNLVALALLSTSRLALDERALTRVLDLYLALLRQVPYSPHTTLPEGDGQALIKHVLGMDLLAEQKDAMGRILYLDEANAVLMTYYRNNVLHIFALPGLLASFFLSSSRMSRDLLGQYVRALYPYLQAELFLRWTPEQLDEVIDQWLAALVSQGLLRQENDIYMRPAPSSRQFVLLTLLARTITQTLQRFYMATSLLLNSGQHTLSAEELEELCVMMAQRLSILHGLNAPEFFDKTLFRHFIQTLVREGVLQPDGDGKLGYHDKLAELAEGVAKRVLSAELRLSIRQVALHRDEPQENPET.

The short motif at 309–314 is the HXXXXD motif element; the sequence is CHRSHI.

This sequence belongs to the GPAT/DAPAT family.

It is found in the cell inner membrane. The catalysed reaction is sn-glycerol 3-phosphate + an acyl-CoA = a 1-acyl-sn-glycero-3-phosphate + CoA. The protein operates within phospholipid metabolism; CDP-diacylglycerol biosynthesis; CDP-diacylglycerol from sn-glycerol 3-phosphate: step 1/3. This Pseudomonas entomophila (strain L48) protein is Glycerol-3-phosphate acyltransferase.